Here is a 498-residue protein sequence, read N- to C-terminus: Protein adenylyltransferase Fic (498 aa).

The chain crosses the membrane as a helical span at residues 43-63 (FAFLAFLAGSFLAFSLHALIS). TPR repeat units lie at residues 126 to 159 (ALSSLRLAQDMYMAGKDDKAARLFEHALALAPRH) and 160 to 194 (PEVLLRYGEFLEHNQRNIVLADQYYFQALTINPSH). Residues 251 to 256 (SVGIEG) carry the Inhibitory (S/T)XXXE(G/N) motif motif. Residues Glu255 and 336–339 (VGGH) contribute to the ATP site. In terms of domain architecture, Fido spans 305–440 (ITIKDILELH…IRPFVRFIAD (136 aa)). The active site involves His383. Residues 387–394 (DGNGRTSR), 419–420 (YY), and Asn427 contribute to the ATP site.

Belongs to the fic family. As to quaternary structure, homodimer.

The protein resides in the membrane. The enzyme catalyses L-tyrosyl-[protein] + ATP = O-(5'-adenylyl)-L-tyrosyl-[protein] + diphosphate. It catalyses the reaction L-threonyl-[protein] + ATP = 3-O-(5'-adenylyl)-L-threonyl-[protein] + diphosphate. It carries out the reaction 3-O-(5'-adenylyl)-L-threonyl-[protein] + H2O = L-threonyl-[protein] + AMP + H(+). Its activity is regulated as follows. The side chain of Glu-255 determines which of the two opposing activities (AMPylase or de-AMPylase) will take place. In response to endoplasmic reticulum stress, mediates de-AMPylase activity. Adenylyltransferase activity is inhibited by the inhibitory helix present at the N-terminus: Glu-255 binds ATP and competes with ATP-binding at Arg-394, thereby preventing adenylyltransferase activity. In unstressed cells, disengagement of Glu-255 promotes adenylyltransferase activity. Activation dissociates ATP-binding from Glu-255, allowing ordered binding of the entire ATP moiety with the alpha-phosphate in an orientation that is productive for accepting an incoming target hydroxyl side chain. Its function is as follows. Protein that can both mediate the addition of adenosine 5'-monophosphate (AMP) to specific residues of target proteins (AMPylation), and the removal of the same modification from target proteins (de-AMPylation), depending on the context. The side chain of Glu-255 determines which of the two opposing activities (AMPylase or de-AMPylase) will take place. Acts as a key regulator of the unfolded protein response (UPR) by mediating AMPylation or de-AMPylation of Hsc70-3/BiP. In unstressed cells, acts as an adenylyltransferase by mediating AMPylation of Hsc70-3/BiP at 'Thr-518', thereby inactivating it. In response to endoplasmic reticulum stress, acts as a phosphodiesterase by mediating removal of ATP (de-AMPylation) from Hsc70-3/BiP at 'Thr-518', leading to restore HSPA5/BiP activity. This is Protein adenylyltransferase Fic from Drosophila willistoni (Fruit fly).